Consider the following 351-residue polypeptide: Ubiquinol oxidase 4, chloroplastic/chromoplastic (351 aa).

A chloroplast and chromoplast-targeting transit peptide spans 1–56 (MAAISGISSGTLTISRPLVTLRRSRAAVSYSSSHRLLHHLPLSSRRLLLRNNHRVQ). Residues 71–91 (ESFKAETSTGTEPLEEPNMSS) form a disordered region. Residues 132–152 (FFVLETIARVPYFAFMSVLHM) traverse the membrane as a helical segment. Fe cation-binding residues include Glu136, Glu175, and His178. A helical membrane pass occupies residues 195 to 215 (FLAQHIATFYYFMTVFLYILS). Residues Glu227, Glu296, and His299 each contribute to the Fe cation site.

Belongs to the alternative oxidase family. Requires Fe cation as cofactor. In terms of tissue distribution, ubiquitous.

Its subcellular location is the plastid. It localises to the chloroplast thylakoid membrane. It is found in the chromoplast membrane. It catalyses the reaction 2 a ubiquinol + O2 = 2 a ubiquinone + 2 H2O. Functionally, acts early in chloroplast biogenesis as a component of a redox chain responsible for phytoene desaturation. Prevents the generation of toxic oxygen radicals and photooxidation of the nascent photosynthetic apparatus. Involved in the differentiation of multiple plastid types, including chloroplasts, amyloplasts, and etioplasts. Might participate in the chloroplast respiratory chain. This is Ubiquinol oxidase 4, chloroplastic/chromoplastic (AOX4) from Arabidopsis thaliana (Mouse-ear cress).